The primary structure comprises 442 residues: Transforming growth factor beta-2 proprotein (442 aa).

The first 20 residues, methionine 1–serine 20, serve as a signal peptide directing secretion. Asparagine 72, asparagine 168, and asparagine 269 each carry an N-linked (GlcNAc...) asparagine glycan. Disulfide bonds link cysteine 337-cysteine 346, cysteine 345-cysteine 408, cysteine 374-cysteine 439, and cysteine 378-cysteine 441.

This sequence belongs to the TGF-beta family. In terms of assembly, interacts with the serine proteases, HTRA1 and HTRA3. Interacts with ASPN. Interacts with MFAP5. Interacts with Transforming growth factor beta-2 (TGF-beta-2) chain; interaction is non-covalent and maintains (TGF-beta-2) in a latent state. Interacts with LRRC32/GARP; leading to regulate activation of TGF-beta-2. Interacts with NREP; the interaction results in a decrease in TGFB2 autoinduction. As to quaternary structure, transforming growth factor beta-2: Homodimer; disulfide-linked. Transforming growth factor beta-2: Interacts with TGF-beta receptors (TGFBR1 and TGFBR2), leading to signal transduction. In terms of processing, the precursor proprotein is cleaved in the Golgi apparatus to form Transforming growth factor beta-2 (TGF-beta-2) and Latency-associated peptide (LAP) chains, which remain non-covalently linked, rendering TGF-beta-2 inactive. Expressed in cardiomyocytes. In terms of tissue distribution, expressed in the aorta, primary bronchus, uterus, heart, skeletal muscle, sciatic nerve and spinal cord but not in the intestine.

Its subcellular location is the secreted. It is found in the extracellular space. The protein resides in the extracellular matrix. In terms of biological role, precursor of the Latency-associated peptide (LAP) and Transforming growth factor beta-2 (TGF-beta-2) chains, which constitute the regulatory and active subunit of TGF-beta-2, respectively. Its function is as follows. Required to maintain the Transforming growth factor beta-2 (TGF-beta-2) chain in a latent state during storage in extracellular matrix. Associates non-covalently with TGF-beta-2 and regulates its activation via interaction with 'milieu molecules', such as LTBP1 and LRRC32/GARP, that control activation of TGF-beta-2. Functionally, multifunctional protein that regulates various processes such as angiogenesis and heart development. Activation into mature form follows different steps: following cleavage of the proprotein in the Golgi apparatus, Latency-associated peptide (LAP) and Transforming growth factor beta-2 (TGF-beta-2) chains remain non-covalently linked rendering TGF-beta-2 inactive during storage in extracellular matrix. At the same time, LAP chain interacts with 'milieu molecules', such as LTBP1 and LRRC32/GARP, that control activation of TGF-beta-2 and maintain it in a latent state during storage in extracellular milieus. Once activated following release of LAP, TGF-beta-2 acts by binding to TGF-beta receptors (TGFBR1 and TGFBR2), which transduce signal. In Rattus norvegicus (Rat), this protein is Transforming growth factor beta-2 proprotein (Tgfb2).